The chain runs to 361 residues: Phospho-N-acetylmuramoyl-pentapeptide-transferase (361 aa).

The next 10 membrane-spanning stretches (helical) occupy residues 25–45 (TGGA…WIID), 72–92 (TPTM…LLWA), 95–115 (LNPY…VGFY), 135–155 (LLIE…LGRA), 169–189 (VMLN…VGAG), 200–220 (GLAI…SYLA), 240–260 (LAVL…FNAP), 264–284 (IFMG…IAVA), 289–309 (IVLA…IVQV), and 338–358 (QIVI…LSTL).

Belongs to the glycosyltransferase 4 family. MraY subfamily. Mg(2+) is required as a cofactor.

It is found in the cell inner membrane. It carries out the reaction UDP-N-acetyl-alpha-D-muramoyl-L-alanyl-gamma-D-glutamyl-meso-2,6-diaminopimeloyl-D-alanyl-D-alanine + di-trans,octa-cis-undecaprenyl phosphate = di-trans,octa-cis-undecaprenyl diphospho-N-acetyl-alpha-D-muramoyl-L-alanyl-D-glutamyl-meso-2,6-diaminopimeloyl-D-alanyl-D-alanine + UMP. It functions in the pathway cell wall biogenesis; peptidoglycan biosynthesis. In terms of biological role, catalyzes the initial step of the lipid cycle reactions in the biosynthesis of the cell wall peptidoglycan: transfers peptidoglycan precursor phospho-MurNAc-pentapeptide from UDP-MurNAc-pentapeptide onto the lipid carrier undecaprenyl phosphate, yielding undecaprenyl-pyrophosphoryl-MurNAc-pentapeptide, known as lipid I. The chain is Phospho-N-acetylmuramoyl-pentapeptide-transferase from Rhodopseudomonas palustris (strain ATCC BAA-98 / CGA009).